The chain runs to 352 residues: Divinyl chlorophyll a/b light-harvesting protein PcbH (352 aa).

6 helical membrane-spanning segments follow: residues 27 to 47 (FIGSHVGHTGIICFATGASCL), 88 to 108 (VATIAIFHLIFSMVYGGAGLA), 140 to 160 (FILGHHLIFLGVANIWFVEWA), 202 to 222 (VMSGHAFLAFLQISGGAFHIA), 242 to 262 (AVLSWSLAGLFLMGVVAAFWA), and 309 to 329 (LVNVQYYFAFFCLQGHLWHAL).

This sequence belongs to the PsbB/PsbC family. IsiA/Pcb subfamily. The antenna complex consists of divinyl chlorophylls (a and b) and divinyl chlorophyll a/b binding proteins and binds more divinyl chlorophyll b than does the antenna complex from high-light-adapted Prochlorococcus. Divinyl chlorophyll a is required as a cofactor. The cofactor is divinyl chlorophyll b.

It localises to the cellular thylakoid membrane. Functionally, the antenna complex functions as a light receptor, it captures and delivers excitation energy to photosystems II and I. The Prochlorales pcb genes are not related to higher plant LHCs. This is Divinyl chlorophyll a/b light-harvesting protein PcbH (pcbH) from Prochlorococcus marinus (strain SARG / CCMP1375 / SS120).